A 434-amino-acid chain; its full sequence is MRLARLLRGGTSVRPLCAVPCASRSLASASASGSGPASELGVPGQVDFYARFSPSPLSMKQFLDFGSVNACEKTSFMFLRQELPVRLANIMKEISLLPDNLLRTPSVQLVQSWYIQSLQELLDFKDKSAEDAKTIYEFTDTVIRIRNRHNDVIPTMAQGVTEYKESFGVDPVTSQNVQYFLDRFYMSRISIRMLLNQHSLLFGGKGSPSHRKHIGSINPNCDVVEVIKDGYENARRLCDLYYVNSPELELEELNAKSPGQTIQVVYVPSHLYHMVFELFKNAMRATMEHHADKGVYPPIQVHVTLGEEDLTVKMSDRGGGVPLRKIDRLFNYMYSTAPRPRVETSRAVPLAGFGYGLPISRLYAQYFQGDLKLYSLEGYGTDAVIYIKALSTESVERLPVYNKAAWKHYKANHEADDWCVPSREPKDMTTFRSS.

The N-terminal 26 residues, 1-26 (MRLARLLRGGTSVRPLCAVPCASRSL), are a transit peptide targeting the mitochondrion. Tyr136 carries the phosphotyrosine; by FGFR1 modification. The 231-residue stretch at 161–391 (TEYKESFGVD…DAVIYIKALS (231 aa)) folds into the Histidine kinase domain. Tyr241 bears the Phosphotyrosine; by FGFR1, ABL1, FLT3 and JAK2 mark. Tyr242 is modified (phosphotyrosine; by FGFR1). ATP-binding positions include 277-284 (ELFKNAMR), Asp316, 335-336 (ST), and 352-357 (GFGYGL). The residue at position 336 (Thr336) is a Phosphothreonine. Lys403 is modified (N6-succinyllysine).

This sequence belongs to the PDK/BCKDK protein kinase family. Homodimer, and heterodimer with PDK2. Interacts with the pyruvate dehydrogenase complex subunit DLAT, and is part of the multimeric pyruvate dehydrogenase complex that contains multiple copies of pyruvate dehydrogenase (E1), dihydrolipoamide acetyltransferase (DLAT, E2) and lipoamide dehydrogenase (DLD, E3). Interacts with phosphoglycerate kinase PGK1; the interaction is direct, occurs under hypoxic conditions and leads to PDK1-mediated inhibition of pyruvate dehydrogenase complex activity. Phosphorylated by constitutively activated ABL1, FGFR1, FLT3 and JAK2 (in vitro), and this may also occur in cancer cells that express constitutively activated ABL1, FGFR1, FLT3 and JAK2. Phosphorylation at Tyr-241 and Tyr-242 strongly increases kinase activity, while phosphorylation at Tyr-136 has a lesser effect. Phosphorylated under hypoxic conditions at Thr-336 by phosphoglycerate kinase PGK1 which has an activating effect.

It is found in the mitochondrion matrix. It catalyses the reaction L-seryl-[pyruvate dehydrogenase E1 alpha subunit] + ATP = O-phospho-L-seryl-[pyruvate dehydrogenase E1 alpha subunit] + ADP + H(+). Its function is as follows. Kinase that plays a key role in regulation of glucose and fatty acid metabolism and homeostasis via phosphorylation of the pyruvate dehydrogenase subunits PDHA1 and PDHA2. This inhibits pyruvate dehydrogenase activity, and thereby regulates metabolite flux through the tricarboxylic acid cycle, down-regulates aerobic respiration and inhibits the formation of acetyl-coenzyme A from pyruvate. Plays an important role in cellular responses to hypoxia and is important for cell proliferation under hypoxia. The chain is [Pyruvate dehydrogenase (acetyl-transferring)] kinase isozyme 1, mitochondrial (Pdk1) from Mus musculus (Mouse).